Reading from the N-terminus, the 152-residue chain is Large ribosomal subunit protein uL15 (152 aa).

The interval 1 to 57 (MTSTLNTLKSNSGSRKKKLRKGRGIAAGQGASCGFGMRGQKSRSGRPTRPGFEGGQM) is disordered. Residues 14 to 23 (SRKKKLRKGR) are compositionally biased toward basic residues. Residues 25–37 (IAAGQGASCGFGM) are compositionally biased toward gly residues.

This sequence belongs to the universal ribosomal protein uL15 family. Part of the 50S ribosomal subunit.

Binds to the 23S rRNA. The sequence is that of Large ribosomal subunit protein uL15 from Prochlorococcus marinus (strain MIT 9301).